The following is a 573-amino-acid chain: Poly(ribitol-phosphate) beta-N-acetylglucosaminyltransferase TarS (573 aa).

Residues Pro-9, Asp-41, Asn-68, Arg-76, 92–94 (DSD), Arg-127, and Glu-178 each bind UDP-N-acetyl-alpha-D-glucosamine. Residue Asp-94 participates in Mn(2+) binding. Asp-179 functions as the Proton acceptor in the catalytic mechanism. UDP-N-acetyl-alpha-D-glucosamine-binding positions include Arg-207 and 211 to 213 (HMS).

The protein belongs to the glycosyltransferase 2 family. Homotrimer. Requires Mn(2+) as cofactor.

It catalyses the reaction 4-O-[(D-ribitylphospho)(n)-di{(2R)-glycerylphospho}]-N-acetyl-beta-D-mannosaminyl-(1-&gt;4)-N-acetyl-alpha-D-glucosaminyl di-trans,octa-cis-undecaprenyl diphosphate + n UDP-N-acetyl-alpha-D-glucosamine = 4-O-([2-N-acetyl-beta-D-glucosaminyl-1-D-ribitylphospho](n)-di{[2R]-1-glycerylphospho})-N-acetyl-beta-D-mannosaminyl-(1-&gt;4)-N-acetyl-alpha-D-glucosaminyl di-trans,octa-cis-undecaprenyl diphosphate + n UDP + n H(+). Its pathway is cell wall biogenesis; poly(ribitol phosphate) teichoic acid biosynthesis. In terms of biological role, attaches beta-O-GlcNAc (beta-O-N-acetyl-D-glucosamine) residues to the C4 position of poly(RboP)-wall teichoic acids (WTAs). Mediates beta-lactam resistance in methicillin resistant Staphylococcus aureus (MRSA) strains. The polypeptide is Poly(ribitol-phosphate) beta-N-acetylglucosaminyltransferase TarS (Staphylococcus aureus (strain Mu50 / ATCC 700699)).